The following is a 326-amino-acid chain: BTB/POZ domain-containing protein At1g21780 (326 aa).

One can recognise a BTB domain in the interval 161–228 (TDVIIHTADG…LYGNITQEEF (68 aa)).

Homodimer. Interacts with CUL3A and CUL3B.

It functions in the pathway protein modification; protein ubiquitination. Its function is as follows. May act as a substrate-specific adapter of an E3 ubiquitin-protein ligase complex (CUL3-RBX1-BTB) which mediates the ubiquitination and subsequent proteasomal degradation of target proteins. In Arabidopsis thaliana (Mouse-ear cress), this protein is BTB/POZ domain-containing protein At1g21780.